The primary structure comprises 174 residues: ATP synthase subunit delta (174 aa).

It belongs to the ATPase delta chain family. F-type ATPases have 2 components, F(1) - the catalytic core - and F(0) - the membrane proton channel. F(1) has five subunits: alpha(3), beta(3), gamma(1), delta(1), epsilon(1). F(0) has three main subunits: a(1), b(2) and c(10-14). The alpha and beta chains form an alternating ring which encloses part of the gamma chain. F(1) is attached to F(0) by a central stalk formed by the gamma and epsilon chains, while a peripheral stalk is formed by the delta and b chains.

The protein localises to the cell inner membrane. F(1)F(0) ATP synthase produces ATP from ADP in the presence of a proton or sodium gradient. F-type ATPases consist of two structural domains, F(1) containing the extramembraneous catalytic core and F(0) containing the membrane proton channel, linked together by a central stalk and a peripheral stalk. During catalysis, ATP synthesis in the catalytic domain of F(1) is coupled via a rotary mechanism of the central stalk subunits to proton translocation. Functionally, this protein is part of the stalk that links CF(0) to CF(1). It either transmits conformational changes from CF(0) to CF(1) or is implicated in proton conduction. The sequence is that of ATP synthase subunit delta from Francisella philomiragia subsp. philomiragia (strain ATCC 25017 / CCUG 19701 / FSC 153 / O#319-036).